An 800-amino-acid polypeptide reads, in one-letter code: Probable replication endonuclease from prophage-like region (800 aa).

Residues Y503 and Y507 each act as O-(5'-phospho-DNA)-tyrosine intermediate in the active site.

It belongs to the phage GPA family.

Its function is as follows. Possible endonuclease which induces a single-strand cut and initiates DNA replication. The protein is Probable replication endonuclease from prophage-like region of Salmonella paratyphi A (strain ATCC 9150 / SARB42).